Consider the following 443-residue polypeptide: MIAAPLDAVADSKGKKPFYSHLYVQVLAAIAAGILLGHFYPELGTQLKPLGDAFIKLVKMVIAPVIFLTVATGIAGMSDLKKVGRVAGKAMLYFLTFSTLALVIGMIVANVVQPGAGMNIDPASLDPKAVATFADKAHEQSIVGFLTNIIPTTIVGAFADGDILQVLFFSVLFGIALAMVGEKGEQVVTFLNALTAPIFKLVGILMKAAPIGAFGAMAFTIGKYGIGSIANLAMLIGTFYITSLLFVLVVLGAVARYNGFSILALLRYIKEELLLVLGTSSSEAALPGLMNKMEKAGCKRSVVGLVIPTGYSFNLDGTNIYMTLAALFIAQATGIQLSWGDQILLLLVAMLSSKGAAGITGAGFITLAATLSVVPSVPVAGMALILGIDRFMSECRALTNLVGNAVATIVVARWENELDTGQLARALGGESEDTSTAGLQPAE.

The next 9 membrane-spanning stretches (helical) occupy residues 17 to 37, 57 to 77, 92 to 112, 139 to 159, 161 to 181, 201 to 221, 234 to 254, 320 to 340, and 368 to 388; these read PFYSHLYVQVLAAIAAGILLG, LVKMVIAPVIFLTVATGIAGM, LYFLTFSTLALVIGMIVANVV, EQSIVGFLTNIIPTTIVGAFA, GDILQVLFFSVLFGIALAMVG, LVGILMKAAPIGAFGAMAFTI, MLIGTFYITSLLFVLVVLGAV, IYMTLAALFIAQATGIQLSWG, and AATLSVVPSVPVAGMALILGI.

This sequence belongs to the dicarboxylate/amino acid:cation symporter (DAACS) (TC 2.A.23) family.

Its subcellular location is the cell inner membrane. Its function is as follows. Responsible for the transport of dicarboxylates such as succinate, fumarate, and malate from the periplasm across the membrane. This chain is C4-dicarboxylate transport protein, found in Rhizobium etli (strain ATCC 51251 / DSM 11541 / JCM 21823 / NBRC 15573 / CFN 42).